Here is a 209-residue protein sequence, read N- to C-terminus: Thiamine-phosphate synthase (209 aa).

Residues 36-40 (QYRDK) and Asn68 each bind 4-amino-2-methyl-5-(diphosphooxymethyl)pyrimidine. The Mg(2+) site is built by Asp69 and Asp87. Thr106 lines the 4-amino-2-methyl-5-(diphosphooxymethyl)pyrimidine pocket. Residue 133-135 (SST) participates in 2-[(2R,5Z)-2-carboxy-4-methylthiazol-5(2H)-ylidene]ethyl phosphate binding. Lys136 is a 4-amino-2-methyl-5-(diphosphooxymethyl)pyrimidine binding site. Position 163 (Gly163) interacts with 2-[(2R,5Z)-2-carboxy-4-methylthiazol-5(2H)-ylidene]ethyl phosphate.

The protein belongs to the thiamine-phosphate synthase family. Mg(2+) serves as cofactor.

The catalysed reaction is 2-[(2R,5Z)-2-carboxy-4-methylthiazol-5(2H)-ylidene]ethyl phosphate + 4-amino-2-methyl-5-(diphosphooxymethyl)pyrimidine + 2 H(+) = thiamine phosphate + CO2 + diphosphate. The enzyme catalyses 2-(2-carboxy-4-methylthiazol-5-yl)ethyl phosphate + 4-amino-2-methyl-5-(diphosphooxymethyl)pyrimidine + 2 H(+) = thiamine phosphate + CO2 + diphosphate. It carries out the reaction 4-methyl-5-(2-phosphooxyethyl)-thiazole + 4-amino-2-methyl-5-(diphosphooxymethyl)pyrimidine + H(+) = thiamine phosphate + diphosphate. It functions in the pathway cofactor biosynthesis; thiamine diphosphate biosynthesis; thiamine phosphate from 4-amino-2-methyl-5-diphosphomethylpyrimidine and 4-methyl-5-(2-phosphoethyl)-thiazole: step 1/1. In terms of biological role, condenses 4-methyl-5-(beta-hydroxyethyl)thiazole monophosphate (THZ-P) and 2-methyl-4-amino-5-hydroxymethyl pyrimidine pyrophosphate (HMP-PP) to form thiamine monophosphate (TMP). The chain is Thiamine-phosphate synthase from Pseudomonas aeruginosa (strain UCBPP-PA14).